The chain runs to 549 residues: MEEVVRFECRDSNLEIYVVQPGERLSIFGSCSFLCLAGNASINDYNLPAVSCESSNFMKISAPQRMDVPAILQVFKSGPSYKHARLKFRLKEVAPKNYEKIMEMIGTTEPSVFIFSKILDFAEETVSGVVSNFLIHSSIQKQIILPPHFFISRDDFIIYPQQQEAQLKSQMNRLNKLRNDGQRTTILPIGHKGAGKSNLMRSLVNRCLSNGYEHVYVLDCDIGQSEFTPCGCLSLTKVTSPILGKPHGHQRASFENSFFYGDITVRDINLYMDIFERLFNKFKVISEPGSVCIINSMGWVTDEGAEILDGITRVTDPELFVEIFRDQTEARYQFLNRAEHNIVEIFANNSIGVIGLPPQKRLPAALIRELTIVGYFSSRLPRPSLASFPKVAPYKLRFENVTICVPVDLLVEDSHVFSSINTQIMALCINNTDLKPRKLYGKDDLPSICVIDGNSPALQCIGFGIIRGVSVEERIIFVVTPVDLLKLEEPPVLVRGMRIQTPTMFYTADPYNRCPYVLNDLEQGNSDNTLDGLYQPSVNTTQFKRSRRF.

Residue 190 to 197 (GHKGAGKS) coordinates ATP.

This sequence belongs to the Clp1 family. NOL9/GRC3 subfamily.

Its subcellular location is the nucleus. It localises to the nucleolus. In terms of biological role, polynucleotide 5'-kinase involved in rRNA processing. The sequence is that of Polynucleotide 5'-hydroxyl-kinase nol-9 (nol-9) from Caenorhabditis elegans.